The chain runs to 3476 residues: Abnormal spindle-like microcephaly-associated protein homolog (3476 aa).

Residues 1–34 (MANRRVGRGCWEVSPTERRPPAGLRGPATEEEAS) are disordered. Ser-280, Ser-283, Ser-367, Ser-392, Ser-425, and Ser-605 each carry phosphoserine. Positions 920 to 1056 (KASKEILLAF…LLWKIAFAFQ (137 aa)) constitute a Calponin-homology (CH) 1 domain. Residues 1057–1078 (VDISLNLDQLKEEIAFLKHTKS) are a coiled coil. Ser-1103 bears the Phosphoserine mark. The Calponin-homology (CH) 2 domain occupies 1110–1261 (SENIKLLMDW…YLSFLCARLL (152 aa)). IQ domains lie at 1347 to 1378 (QNKA…IILQ), 1393 to 1422 (YLWA…MLKS), 1582 to 1613 (LKKT…VIIQ), 1605 to 1634 (MKKA…KTRS), 1632 to 1661 (TRSA…SVIK), 1655 to 1684 (ILTS…TTIK), 1728 to 1757 (MRES…AVIS), 1751 to 1782 (QRKA…IVIQ), 1801 to 1830 (VKKA…AALK), 1824 to 1853 (QSIA…SIIK), 1874 to 1903 (TKAA…AALK), 1897 to 1928 (EHQA…LVIQ), 1947 to 1978 (LRHA…IIIQ), 1970 to 2001 (QXKC…LLIQ), 2020 to 2049 (TKAA…AAVT), 2043 to 2074 (CNKA…IIIQ), 2093 to 2124 (LKKT…TFIK), 2116 to 2147 (MHRA…IVIQ), 2239 to 2270 (LRHS…TLIQ), 2262 to 2293 (MHVA…VWIQ), 2311 to 2342 (VQNA…TFIQ), 2334 to 2365 (MHRA…VVIQ), 2384 to 2415 (QRRS…TLIQ), 2407 to 2438 (MHSS…IFVQ), 2457 to 2488 (LRKA…VLIQ), 2530 to 2561 (QWHS…IIIQ), 2624 to 2653 (QHQA…TVVS), 2665 to 2696 (RTQA…TLIQ), 2688 to 2719 (MHRA…VVIQ), 2738 to 2767 (VQKS…EKMA), 2814 to 2845 (QSRA…RIQF), 2859 to 2890 (QKRA…VVLQ), 2909 to 2938 (IRSS…STIK), 2932 to 2963 (IKNS…KIQA), 2954 to 2985 (KVKA…KIIQ), 3029 to 3060 (RHRA…LIIQ), 3079 to 3110 (FKKS…RLLH), and 3203 to 3234 (FTSG…IRLS).

The protein localises to the cytoplasm. The protein resides in the cytoskeleton. It localises to the spindle. Its subcellular location is the nucleus. Its function is as follows. Probable role in mitotic spindle regulation and coordination of mitotic processes. May have a preferential role in regulating neurogenesis. This is Abnormal spindle-like microcephaly-associated protein homolog (ASPM) from Macaca fascicularis (Crab-eating macaque).